Reading from the N-terminus, the 561-residue chain is MSSPYGKVDEREHVRLEARRKTRKNIAIIAVSLVILAGIVIGAVFGTMAHKKSPETVETNNNGDSISVSVKAVCDVTLHKEKCFETLGSAPNASSLNPEELFRYAVKITIAEVSKAINAFSSSLGDEKNNITMNACAELLDLTIDNLNNTLTSSSNGDVTVPELVDDLRTWLSSAGTYQRTCVETLAPDMRPFGESHLKNSTELTSNALAIITWLGKIADSFKLRRRLLTTADVEVDFHAGRRLLQSTDLRKVADIVVAKDGSGKYRTIKRALQDVPEKSEKRTIIYVKKGVYFENVKVEKKMWNVIVVGDGESKSIVSGRLNVIDGTPTFKTATFAVFGKGFMARDMGFINTAGPSKHQAVALMVSADLTAFYRCTMNAYQDTLYVHAQRQFYRECTIIGTVDFIFGNSASVLQSCRILPRRPMKGQQNTITAQGRTDPNMNTGISIHRCNISPLGDLTDVMTFLGRPWKNFSTTVIMDSYLHGFIDRKGWLPWTGDSAPDTIFYGEYKNTGPGASTKNRVKWKGLRFLSTKEANRFTVKPFIDGGRWLPATKVPFRSGL.

A helical membrane pass occupies residues 26 to 46; it reads IAIIAVSLVILAGIVIGAVFG. Positions 64–211 are pectinesterase inhibitor 24; that stretch reads DSISVSVKAV…TELTSNALAI (148 aa). N-linked (GlcNAc...) asparagine glycosylation is found at N92, N130, N148, and N200. The tract at residues 255–548 is pectinesterase 24; that stretch reads DIVVAKDGSG…TVKPFIDGGR (294 aa). The substrate site is built by T330 and Q360. D383 (proton donor; for pectinesterase activity) is an active-site residue. C397 and C417 form a disulfide bridge. The active-site Nucleophile; for pectinesterase activity is the D404. Substrate is bound by residues R468 and W470. The N-linked (GlcNAc...) asparagine glycan is linked to N472.

This sequence in the N-terminal section; belongs to the PMEI family. In the C-terminal section; belongs to the pectinesterase family.

Its subcellular location is the membrane. The catalysed reaction is [(1-&gt;4)-alpha-D-galacturonosyl methyl ester](n) + n H2O = [(1-&gt;4)-alpha-D-galacturonosyl](n) + n methanol + n H(+). It functions in the pathway glycan metabolism; pectin degradation; 2-dehydro-3-deoxy-D-gluconate from pectin: step 1/5. Functionally, acts in the modification of cell walls via demethylesterification of cell wall pectin. This Arabidopsis thaliana (Mouse-ear cress) protein is Putative pectinesterase/pectinesterase inhibitor 24 (PME24).